The following is a 1562-amino-acid chain: E3 ubiquitin-protein ligase listerin (1562 aa).

HEAT repeat units lie at residues 41–78 (SLYSNELKLIFKSLLKRDETTKEKALMDLSNLISDFNQ), 127–164 (KFLKDFIPLILLGTCELDYSVSKPSLNELTECFNKDPA), 175–217 (EQLL…SAVL), 262–301 (ETVLRLIDVLYTRGYMPSHKNIMKLAVKKLLKSLTHITSK), 304–348 (LKVC…VSRT), 495–532 (SAISRLFDFFVQLIETDPSNVFNKYDGVYDALNYFLDS), 555–592 (STYQNFAGIMAQYSNSKFFKMNTDAITSLEDFFIVALS), 813–850 (IRYALFLDALLDALPERVNNHIVAFITVVSELVTDYNC), 908–945 (YYSRVLYKVLLNSIDTVSSTTLNGLLASVESFVTKTVR), 997–1037 (FKSL…WLDS), 1047–1085 (TVRLLLLDFFTKLMRFEGVRDMGITAFELSERLLADSLS), 1188–1226 (INQSRLLTTLLGSLVVKTQQDIIIEYELRIQKQTGSDVD), 1263–1298 (NSFIKYLWYWHLILMYFKDTSYNMRQIFIEQLKEAG), and 1299–1339 (LINR…NFSP). The RING-type zinc finger occupies 1508-1555 (CAICYSILHAVDRKLPSKTCPTCKNKFHGACLYKWFRSSGNNTCPLCR).

Belongs to the LTN1 family. Component of the ribosome quality control complex (RQC), composed of the E3 ubiquitin ligase RKR1/LTN1, RQC1 and RQC2, as well as CDC48 and its ubiquitin-binding cofactors associated with the 60S ribosomal subunits.

It localises to the nucleus. Its subcellular location is the cytoplasm. The protein localises to the cytosol. The catalysed reaction is S-ubiquitinyl-[E2 ubiquitin-conjugating enzyme]-L-cysteine + [acceptor protein]-L-lysine = [E2 ubiquitin-conjugating enzyme]-L-cysteine + N(6)-ubiquitinyl-[acceptor protein]-L-lysine.. It participates in protein modification; protein ubiquitination. Its function is as follows. E3 ubiquitin-protein ligase component of the ribosome quality control complex (RQC), a ribosome-associated complex that mediates ubiquitination and extraction of incompletely synthesized nascent chains for proteasomal degradation. Mediates ubiquitination of proteins derived from mRNAs lacking stop codons (non-stop proteins) and other translation arrest products induced by poly-lysine sequences and tandem rare codons. Ubiquitination leads to CDC48 recruitment for extraction and degradation of the incomplete translation product. May indirectly play a role in chromatin function and transcription. This is E3 ubiquitin-protein ligase listerin from Saccharomyces cerevisiae (strain ATCC 204508 / S288c) (Baker's yeast).